Consider the following 201-residue polypeptide: Recombination protein RecR (201 aa).

The C4-type zinc-finger motif lies at 60 to 75; that stretch reads CSRCGNVDTVDPCTVC. Residues 83–178 form the Toprim domain; sequence SVIIVVEDVA…KITRLAHGVP (96 aa).

The protein belongs to the RecR family.

In terms of biological role, may play a role in DNA repair. It seems to be involved in an RecBC-independent recombinational process of DNA repair. It may act with RecF and RecO. The protein is Recombination protein RecR of Rhizobium rhizogenes (strain K84 / ATCC BAA-868) (Agrobacterium radiobacter).